The sequence spans 625 residues: RalA-binding protein 1 (625 aa).

2 stretches are compositionally biased toward basic and acidic residues: residues 1 to 11 (MDFDSPEEKEF) and 20 to 60 (ADAK…KDRG). The disordered stretch occupies residues 1-172 (MDFDSPEEKE…SKQLSQQQDD (172 aa)). Phosphoserine occurs at positions 68 and 69. A compositionally biased stretch (basic and acidic residues) spans 94-157 (KSKEKREKSR…EKDKKADKKD (64 aa)). Positions 191 to 385 (VSLATERSRC…PLTSTSPKLP (195 aa)) constitute a Rho-GAP domain. The segment at 443–500 (QEKTAEEVDNSSSAPPAVASEDTTDSKPAGTPAVSTNNSISQEEPKTDTLTPKDAPND) is disordered. Over residues 475 to 484 (AVSTNNSISQ) the composition is skewed to polar residues.

Interacts with CycB and numb.

Functionally, participates in receptor endocytosis during interphase, is also involved in mitotic processes when endocytosis is switched off. The sequence is that of RalA-binding protein 1 from Drosophila melanogaster (Fruit fly).